Consider the following 267-residue polypeptide: 4-hydroxy-tetrahydrodipicolinate reductase (267 aa).

NAD(+)-binding positions include 9–14 (GVSGRM) and D35. Residue R36 coordinates NADP(+). Residues 98–100 (GTT) and 122–125 (APNM) each bind NAD(+). H155 acts as the Proton donor/acceptor in catalysis. Residue H156 coordinates (S)-2,3,4,5-tetrahydrodipicolinate. The active-site Proton donor is the K159. Residue 165–166 (GT) participates in (S)-2,3,4,5-tetrahydrodipicolinate binding.

The protein belongs to the DapB family.

It localises to the cytoplasm. It catalyses the reaction (S)-2,3,4,5-tetrahydrodipicolinate + NAD(+) + H2O = (2S,4S)-4-hydroxy-2,3,4,5-tetrahydrodipicolinate + NADH + H(+). The enzyme catalyses (S)-2,3,4,5-tetrahydrodipicolinate + NADP(+) + H2O = (2S,4S)-4-hydroxy-2,3,4,5-tetrahydrodipicolinate + NADPH + H(+). The protein operates within amino-acid biosynthesis; L-lysine biosynthesis via DAP pathway; (S)-tetrahydrodipicolinate from L-aspartate: step 4/4. Functionally, catalyzes the conversion of 4-hydroxy-tetrahydrodipicolinate (HTPA) to tetrahydrodipicolinate. The polypeptide is 4-hydroxy-tetrahydrodipicolinate reductase (Thiobacillus denitrificans (strain ATCC 25259 / T1)).